The primary structure comprises 358 residues: Probable butyrate kinase (358 aa).

Belongs to the acetokinase family.

The protein resides in the cytoplasm. The catalysed reaction is butanoate + ATP = butanoyl phosphate + ADP. The protein is Probable butyrate kinase of Oceanobacillus iheyensis (strain DSM 14371 / CIP 107618 / JCM 11309 / KCTC 3954 / HTE831).